The chain runs to 77 residues: U8-lycotoxin-Ls1t (77 aa).

Residues 1 to 20 (MKLIIFTGLVLFAIVSLIEA) form the signal peptide. Residues 21 to 26 (QAENEK) constitute a propeptide that is removed on maturation.

It belongs to the neurotoxin 19 (CSTX) family. 08 (U8-Lctx) subfamily. Post-translationally, contains 4 disulfide bonds. In terms of tissue distribution, expressed by the venom gland.

The protein resides in the secreted. The protein is U8-lycotoxin-Ls1t of Lycosa singoriensis (Wolf spider).